Consider the following 438-residue polypeptide: GTPase Obg (438 aa).

The 159-residue stretch at 6-164 (AEFVDRVKIF…RWLELELKIL (159 aa)) folds into the Obg domain. In terms of domain architecture, OBG-type G spans 165–335 (ADVGLVGYPN…LLDRVASIVR (171 aa)). GTP contacts are provided by residues 171-178 (GYPNVGKS), 196-200 (FTTLV), 217-220 (DIPG), 287-290 (NKID), and 316-318 (SAV). Residues Ser-178 and Thr-198 each contribute to the Mg(2+) site. Residues 358 to 438 (VWRKLPERFE…IGNFEFEYRE (81 aa)) enclose the OCT domain.

This sequence belongs to the TRAFAC class OBG-HflX-like GTPase superfamily. OBG GTPase family. As to quaternary structure, monomer. It depends on Mg(2+) as a cofactor.

It localises to the cytoplasm. In terms of biological role, an essential GTPase which binds GTP, GDP and possibly (p)ppGpp with moderate affinity, with high nucleotide exchange rates and a fairly low GTP hydrolysis rate. Plays a role in control of the cell cycle, stress response, ribosome biogenesis and in those bacteria that undergo differentiation, in morphogenesis control. This is GTPase Obg from Thermotoga neapolitana (strain ATCC 49049 / DSM 4359 / NBRC 107923 / NS-E).